A 196-amino-acid polypeptide reads, in one-letter code: Elongation factor Ts (196 aa).

The involved in Mg(2+) ion dislocation from EF-Tu stretch occupies residues 80-83 (TDFV).

It belongs to the EF-Ts family.

The protein resides in the cytoplasm. In terms of biological role, associates with the EF-Tu.GDP complex and induces the exchange of GDP to GTP. It remains bound to the aminoacyl-tRNA.EF-Tu.GTP complex up to the GTP hydrolysis stage on the ribosome. The protein is Elongation factor Ts of Desulfotalea psychrophila (strain LSv54 / DSM 12343).